A 145-amino-acid polypeptide reads, in one-letter code: uncharacterized protein (145 aa).

The chain crosses the membrane as a helical span at residues 4–24; that stretch reads IYMLVALLISSLVLFAGCVQN.

The protein localises to the membrane. This is an uncharacterized protein from Methanocaldococcus jannaschii (strain ATCC 43067 / DSM 2661 / JAL-1 / JCM 10045 / NBRC 100440) (Methanococcus jannaschii).